Consider the following 1335-residue polypeptide: Phospholipid-transporting ATPase IK (1335 aa).

The Cytoplasmic segment spans residues 1 to 74 (MDGVHLGENL…LYEQFHRMSN (74 aa)). Residues 75–95 (LYFLFIIILQGIPEISTLPWF) traverse the membrane as a helical segment. At 96–295 (TLFAPLVCLF…LDLMMNKLVA (200 aa)) the chain is on the exoplasmic loop side. Residues 296 to 316 (LIFLSLVIASLLLTVGFTFMV) traverse the membrane as a helical segment. The Cytoplasmic portion of the chain corresponds to 317 to 339 (KQFKAKHYYMSPTHGRSDAMESF). Residues 340-360 (FIFWGFLILLSVMVPMAMFII) traverse the membrane as a helical segment. Residues 361 to 917 (AEFIYLGNSI…YMRVCKFLRY (557 aa)) lie on the Exoplasmic loop side of the membrane. The 4-aspartylphosphate intermediate role is filled by aspartate 407. Residues aspartate 407, lysine 408, threonine 409, glutamate 504, phenylalanine 545, lysine 568, arginine 601, threonine 681, glycine 682, aspartate 683, arginine 831, and lysine 837 each coordinate ATP. Aspartate 407 provides a ligand contact to Mg(2+). Threonine 409 is a Mg(2+) binding site. Mg(2+) is bound at residue aspartate 857. 2 residues coordinate ATP: asparagine 860 and aspartate 861. Mg(2+) is bound at residue aspartate 861. The helical transmembrane segment at 918–938 (FFYKTVASMMAQIWFSLVNGF) threads the bilayer. At 939-946 (SAQPLYEG) the chain is on the cytoplasmic side. Residues 947 to 967 (WFLALFNLLYSTLPVLYIGLF) form a helical membrane-spanning segment. The Exoplasmic loop portion of the chain corresponds to 968 to 995 (EQDVTAEKSLKMPELYMAGQKGELFNYS). A helical membrane pass occupies residues 996–1016 (IFMQAITHGTITSMINFFVTV). At 1017–1033 (MVSSDMSKAGSSHDYQS) the chain is on the cytoplasmic side. The chain crosses the membrane as a helical span at residues 1034 to 1054 (LGVLVAISSLLSVTLEVMLVV). Lysine 1055 is a topological domain (exoplasmic loop). A helical transmembrane segment spans residues 1056–1076 (YWTLLFVGAVVLSLSSYVLMT). Residues 1077 to 1104 (SLTQSLWMYRISPKTFPFLFADYNVLFE) are Cytoplasmic-facing. A helical membrane pass occupies residues 1105–1125 (PCSLLLIVLNVALNVLPMLAL). Residues 1126–1335 (RTIHRTVLKQ…SQLEVPRKQS (210 aa)) lie on the Exoplasmic loop side of the membrane. 3 disordered regions span residues 1192–1215 (VDDSDGGTVCESLNPPEEDIPLQN), 1236–1280 (FGKG…GKLL), and 1314–1335 (SPLWRDSASSSPSQLEVPRKQS). 2 stretches are compositionally biased toward polar residues: residues 1246–1255 (PNTSSQTMEK) and 1266–1276 (QKLPTTTSATS).

It belongs to the cation transport ATPase (P-type) (TC 3.A.3) family. Type IV subfamily. It depends on Mg(2+) as a cofactor. Expressed in testis, specifically in spermatids within seminiferous tubules (at protein level).

Its subcellular location is the cytoplasmic vesicle. It is found in the secretory vesicle. The protein localises to the acrosome membrane. The protein resides in the endoplasmic reticulum membrane. It catalyses the reaction ATP + H2O + phospholipidSide 1 = ADP + phosphate + phospholipidSide 2.. It carries out the reaction a 1,2-diacyl-sn-glycero-3-phospho-L-serine(out) + ATP + H2O = a 1,2-diacyl-sn-glycero-3-phospho-L-serine(in) + ADP + phosphate + H(+). Functionally, P4-ATPase flippase which catalyzes the hydrolysis of ATP coupled to the transport of aminophospholipids from the outer to the inner leaflet of various membranes and ensures the maintenance of asymmetric distribution of phospholipids. Phospholipid translocation also seems to be implicated in vesicle formation and in uptake of lipid signaling molecules. May be responsible for the maintenance of asymmetric distribution of phosphatidylserine (PS) in spermatozoa membranes. Involved in acrosome reactions and binding of spermatozoa to zona pellucida. The sequence is that of Phospholipid-transporting ATPase IK from Mus musculus (Mouse).